A 1407-amino-acid polypeptide reads, in one-letter code: DNA-directed RNA polymerase subunit beta' (1407 aa).

Cys70, Cys72, Cys85, and Cys88 together coordinate Zn(2+). Mg(2+) is bound by residues Asp460, Asp462, and Asp464. Zn(2+) contacts are provided by Cys814, Cys888, Cys895, and Cys898.

It belongs to the RNA polymerase beta' chain family. In terms of assembly, the RNAP catalytic core consists of 2 alpha, 1 beta, 1 beta' and 1 omega subunit. When a sigma factor is associated with the core the holoenzyme is formed, which can initiate transcription. Requires Mg(2+) as cofactor. The cofactor is Zn(2+).

It catalyses the reaction RNA(n) + a ribonucleoside 5'-triphosphate = RNA(n+1) + diphosphate. In terms of biological role, DNA-dependent RNA polymerase catalyzes the transcription of DNA into RNA using the four ribonucleoside triphosphates as substrates. This chain is DNA-directed RNA polymerase subunit beta', found in Salmonella paratyphi B (strain ATCC BAA-1250 / SPB7).